The primary structure comprises 361 residues: Peptide chain release factor 1 (361 aa).

Gln-237 carries the post-translational modification N5-methylglutamine. The segment at 283-307 is disordered; the sequence is AQQQEQQEQQSSTRKELIGSGDRSQ.

Belongs to the prokaryotic/mitochondrial release factor family. In terms of processing, methylated by PrmC. Methylation increases the termination efficiency of RF1.

It localises to the cytoplasm. Its function is as follows. Peptide chain release factor 1 directs the termination of translation in response to the peptide chain termination codons UAG and UAA. The sequence is that of Peptide chain release factor 1 from Vesicomyosocius okutanii subsp. Calyptogena okutanii (strain HA).